A 167-amino-acid polypeptide reads, in one-letter code: Chorion class CB protein PC404 (167 aa).

The left arm stretch occupies residues 1 to 55 (IGREAIVGAGLQGPFGGPWPYDALSPFDMPYGPALPAMSCGAGSFGPSSGFAPAA). Residues 56 to 126 (AYGGGLAVTS…GDGAVGIVAE (71 aa)) are central domain. Positions 127-167 (TPFASTSVNPAYGYGGAIGGGVPYNSYGPIGYGGCGYNALY) are right arm.

It belongs to the chorion protein family.

This protein is one of many from the eggshell of the silk moth. The chain is Chorion class CB protein PC404 from Antheraea polyphemus (Polyphemus moth).